An 84-amino-acid polypeptide reads, in one-letter code: Small ribosomal subunit protein bS18A (84 aa).

It belongs to the bacterial ribosomal protein bS18 family. Part of the 30S ribosomal subunit. Forms a tight heterodimer with protein bS6.

Its function is as follows. Binds as a heterodimer with protein bS6 to the central domain of the 16S rRNA, where it helps stabilize the platform of the 30S subunit. This Mycolicibacterium paratuberculosis (strain ATCC BAA-968 / K-10) (Mycobacterium paratuberculosis) protein is Small ribosomal subunit protein bS18A.